Reading from the N-terminus, the 211-residue chain is MKKIHLITLSLAGICQSAHLVQQLAYSGKCDSNAFSICLKSILEINPTSFIAIYGNHEKNLIIGLEILLSTLTFSSFSYSYIELIKYISNMMIIEKKLKKSRTAIYSLKNKISVISSEYYLNYNIKNLTRKLGELYLEIISSLGSRIVIKGIKDFLQDHQIQEKIRCLLFSGIRAIVLWKQYGGNQLQLIYFRYFIIKKAKKILYHLKDAT.

This sequence belongs to the HflD family.

The protein localises to the cytoplasm. It localises to the cell membrane. This chain is High frequency lysogenization protein HflD homolog, found in Buchnera aphidicola subsp. Acyrthosiphon pisum (strain 5A).